The sequence spans 214 residues: Probable nicotinate-nucleotide adenylyltransferase (214 aa).

It belongs to the NadD family.

The enzyme catalyses nicotinate beta-D-ribonucleotide + ATP + H(+) = deamido-NAD(+) + diphosphate. Its pathway is cofactor biosynthesis; NAD(+) biosynthesis; deamido-NAD(+) from nicotinate D-ribonucleotide: step 1/1. Its function is as follows. Catalyzes the reversible adenylation of nicotinate mononucleotide (NaMN) to nicotinic acid adenine dinucleotide (NaAD). The sequence is that of Probable nicotinate-nucleotide adenylyltransferase from Aeromonas salmonicida (strain A449).